Consider the following 210-residue polypeptide: 3 beta-hydroxysteroid dehydrogenase/Delta 5--&gt;4-isomerase (210 aa).

Tyrosine 29 functions as the Proton acceptor in the catalytic mechanism. Lysine 33 lines the NAD(+) pocket.

This sequence belongs to the 3-beta-HSD family.

It catalyses the reaction a 3beta-hydroxy-Delta(5)-steroid + NAD(+) = a 3-oxo-Delta(5)-steroid + NADH + H(+). The catalysed reaction is a 3-oxo-Delta(5)-steroid = a 3-oxo-Delta(4)-steroid. Its pathway is lipid metabolism; steroid biosynthesis. In terms of biological role, catalyzes the oxidative conversion of Delta(5)-ene-3-beta-hydroxy steroid, and the oxidative conversion of ketosteroids. The 3-beta-HSD enzymatic system plays a crucial role in the biosynthesis of all classes of hormonal steroids. During viral infection, steroid production contributes to virulence by inhibiting the host inflammatory response. The protein is 3 beta-hydroxysteroid dehydrogenase/Delta 5--&gt;4-isomerase (OPG174) of Variola virus (isolate Human/India/Ind3/1967) (VARV).